We begin with the raw amino-acid sequence, 261 residues long: 2,3-dihydro-2,3-dihydroxybenzoate dehydrogenase (261 aa).

Phe-12–Ala-36 lines the NAD(+) pocket. Ser-144 is a substrate binding site. Tyr-157 serves as the catalytic Proton acceptor.

This sequence belongs to the short-chain dehydrogenases/reductases (SDR) family.

It is found in the cytoplasm. It carries out the reaction (2S,3S)-2,3-dihydroxy-2,3-dihydrobenzoate + NAD(+) = 2,3-dihydroxybenzoate + NADH + H(+). It participates in siderophore biosynthesis; bacillibactin biosynthesis. The protein is 2,3-dihydro-2,3-dihydroxybenzoate dehydrogenase (dhbA) of Bacillus subtilis (strain 168).